The chain runs to 159 residues: 6,7-dimethyl-8-ribityllumazine synthase (159 aa).

5-amino-6-(D-ribitylamino)uracil is bound by residues W28, 59–61 (ALE), and 81–83 (CVI). Position 86–87 (86–87 (GT)) interacts with (2S)-2-hydroxy-3-oxobutyl phosphate. H89 serves as the catalytic Proton donor. A 5-amino-6-(D-ribitylamino)uracil-binding site is contributed by N114. R128 lines the (2S)-2-hydroxy-3-oxobutyl phosphate pocket.

This sequence belongs to the DMRL synthase family.

The enzyme catalyses (2S)-2-hydroxy-3-oxobutyl phosphate + 5-amino-6-(D-ribitylamino)uracil = 6,7-dimethyl-8-(1-D-ribityl)lumazine + phosphate + 2 H2O + H(+). It functions in the pathway cofactor biosynthesis; riboflavin biosynthesis; riboflavin from 2-hydroxy-3-oxobutyl phosphate and 5-amino-6-(D-ribitylamino)uracil: step 1/2. Catalyzes the formation of 6,7-dimethyl-8-ribityllumazine by condensation of 5-amino-6-(D-ribitylamino)uracil with 3,4-dihydroxy-2-butanone 4-phosphate. This is the penultimate step in the biosynthesis of riboflavin. This Corynebacterium kroppenstedtii (strain DSM 44385 / JCM 11950 / CIP 105744 / CCUG 35717) protein is 6,7-dimethyl-8-ribityllumazine synthase.